Reading from the N-terminus, the 181-residue chain is Oligoribonuclease (181 aa).

The Exonuclease domain maps to 8–171 (LIWIDLEMTG…DDIRESIAEL (164 aa)). The active site involves Y129.

Belongs to the oligoribonuclease family.

It is found in the cytoplasm. 3'-to-5' exoribonuclease specific for small oligoribonucleotides. The polypeptide is Oligoribonuclease (Vibrio cholerae serotype O1 (strain ATCC 39541 / Classical Ogawa 395 / O395)).